We begin with the raw amino-acid sequence, 225 residues long: Insulin-induced gene 2 protein (225 aa).

Residues 1–28 are Cytoplasmic-facing; the sequence is MAENDAKPTLPKKSGPYISSVTSHGMNL. The chain crosses the membrane as a helical span at residues 29–51; the sequence is VIRGIVLFFIGVFLALVLNLLQI. Residues 52–70 are Lumenal-facing; sequence QRNVTLFPPDVITSIFSSA. A helical transmembrane segment spans residues 71 to 88; sequence WWVPPCCGTASAVIGLLY. Over 89-103 the chain is Cytoplasmic; that stretch reads PCMDRHLGEPHKFKR. Residues 104–126 traverse the membrane as a helical segment; it reads EWSSVMRCVAVFVGINHASAKVD. The Lumenal portion of the chain corresponds to 127-129; sequence FAN. Residues 130 to 148 traverse the membrane as a helical segment; it reads NIQLSLTLAALSIGLWWTF. Residues 149 to 153 lie on the Cytoplasmic side of the membrane; sequence DRSRS. A helical membrane pass occupies residues 154–175; it reads GFGLGVGIAFLATLVSQLLVYN. Topologically, residues 176 to 189 are lumenal; sequence GVYQYTSPDFLYVR. Residues 190–207 form a helical membrane-spanning segment; the sequence is SWLPCIFFAGGITMGNIG. The Cytoplasmic portion of the chain corresponds to 208–225; it reads RQLAMYECKVIAEKSHED. Positions 219–225 match the KxHxx motif; that stretch reads AEKSHED.

It belongs to the INSIG family. As to quaternary structure, interacts with SCAP; interaction is direct and only takes place in the presence of sterols; it prevents interaction between SCAP and the coat protein complex II (COPII). Associates with the SCAP-SREBP complex; association is mediated via its interaction with SCAP and only takes place in the presence of sterols.

It is found in the endoplasmic reticulum membrane. Its function is as follows. Oxysterol-binding protein that mediates feedback control of cholesterol synthesis by controlling both endoplasmic reticulum to Golgi transport of SCAP and degradation of HMGCR. Acts as a negative regulator of cholesterol biosynthesis by mediating the retention of the SCAP-SREBP complex in the endoplasmic reticulum, thereby blocking the processing of sterol regulatory element-binding proteins (SREBPs). Binds oxysterol, including 22-hydroxycholesterol, 24-hydroxycholesterol, 25-hydroxycholesterol and 27-hydroxycholesterol, regulating interaction with SCAP and retention of the SCAP-SREBP complex in the endoplasmic reticulum. In presence of oxysterol, interacts with SCAP, retaining the SCAP-SREBP complex in the endoplasmic reticulum, thereby preventing SCAP from escorting SREBPs to the Golgi. Sterol deprivation reduces oxysterol-binding, disrupting the interaction between INSIG2 and SCAP, thereby promoting Golgi transport of the SCAP-SREBP complex, followed by processing and nuclear translocation of SREBPs. Also regulates cholesterol synthesis by regulating degradation of HMGCR. This Gallus gallus (Chicken) protein is Insulin-induced gene 2 protein.